A 483-amino-acid chain; its full sequence is 5-hydroxytryptamine receptor 3A (483 aa).

Positions 1–23 (MPLCIPQVLLALFLSVLIAQGEG) are cleaved as a signal peptide. At 24–246 (SRRRATQAHS…MKFYVVIRRR (223 aa)) the chain is on the extracellular side. 3 N-linked (GlcNAc...) asparagine glycosylation sites follow: asparagine 109, asparagine 175, and asparagine 191. Cysteine 162 and cysteine 176 are disulfide-bonded. Residues 247-273 (PLFYAVSLLLPSIFLMVVDIVGFCLPP) form a helical membrane-spanning segment. Residues 274–278 (DSGER) are Cytoplasmic-facing. Residues 279–297 (VSFKITLLLGYSVFLIIVS) form a helical membrane-spanning segment. Over 298–307 (DTLPATAIGT) the chain is Extracellular. A helical transmembrane segment spans residues 308–326 (PLIGVYFVVCMALLVISLA). Over 327 to 460 (ETIFIVQLVH…GYVLDRLLFR (134 aa)) the chain is Cytoplasmic. The disordered stretch occupies residues 393–414 (VGSPQDLEKTSRSRDSPLPPPR). Residues 398-407 (DLEKTSRSRD) show a composition bias toward basic and acidic residues. The segment at 419-455 (AVRGLLQELSSIRHSLEKRDEMREVARDWLRVGYVLD) is HA-stretch; determines single-channel conductance in 5-HT3 receptors. A helical membrane pass occupies residues 461–480 (IYLLAVLAYSITLVTLWSIW). Residues 481–483 (HYS) lie on the Extracellular side of the membrane.

This sequence belongs to the ligand-gated ion channel (TC 1.A.9) family. 5-hydroxytryptamine receptor (TC 1.A.9.2) subfamily. HTR3A sub-subfamily. In terms of assembly, forms homopentameric as well as heteropentameric serotonin-activated cation-selective channel complexes with HTR3B or HTR3C or HTR3D or HTR3E. The homomeric complex is functional but exhibits low conductance with modified voltage dependence, and decreased agonist and antagonist affinity. Heteropentameric complexes display properties which resemble that of neuronal serotonin-activated channels in vivo. Interacts with RIC3. Expressed in central and peripheral neurons.

The protein resides in the postsynaptic cell membrane. It is found in the cell membrane. It catalyses the reaction Na(+)(in) = Na(+)(out). The enzyme catalyses K(+)(in) = K(+)(out). It carries out the reaction Ca(2+)(in) = Ca(2+)(out). The catalysed reaction is Mg(2+)(in) = Mg(2+)(out). In terms of biological role, forms serotonin (5-hydroxytryptamine/5-HT3)-activated cation-selective channel complexes, which when activated cause fast, depolarizing responses in neurons. This chain is 5-hydroxytryptamine receptor 3A, found in Rattus norvegicus (Rat).